The following is a 297-amino-acid chain: Glucuronoxylan 4-O-methyltransferase 3 (297 aa).

A helical membrane pass occupies residues 9–29 (LNLKVIFIGSSILILIIIYLA). The span at 35–47 (SSSSKPISKTNLS) shows a compositional bias: low complexity. A disordered region spans residues 35-63 (SSSSKPISKTNLSQEEEETQHKQEGCPTT).

The protein belongs to the methyltransferase superfamily. As to expression, expressed in hypocotyls, roots, rosette leaves, stems and siliques.

Its subcellular location is the golgi apparatus membrane. It catalyses the reaction glucuronoxylan D-glucuronate + n S-adenosyl-L-methionine = glucuronoxylan 4-O-methyl-D-glucuronate + n S-adenosyl-L-homocysteine + n H(+). Functionally, methyltransferase catalyzing 4-O-methylation of glucuronic acid side chains on xylan. This is Glucuronoxylan 4-O-methyltransferase 3 (GXM3) from Arabidopsis thaliana (Mouse-ear cress).